The following is a 117-amino-acid chain: Membrane-anchored ubiquitin-fold protein 1 (117 aa).

Residues 8–74 form the Ubiquitin-like domain; that stretch reads LEIKFRLTDG…LENSKTVKDY (67 aa). Cys112 is lipidated: S-palmitoyl cysteine. Cys114 bears the Cysteine methyl ester mark. A lipid anchor (S-farnesyl cysteine) is attached at Cys114. A propeptide spans 115-117 (removed in mature form); it reads SVM.

The protein localises to the cell membrane. Its function is as follows. May serve as docking site to facilitate the association of other proteins to the plasma membrane. The polypeptide is Membrane-anchored ubiquitin-fold protein 1 (MUB1) (Arabidopsis thaliana (Mouse-ear cress)).